The chain runs to 94 residues: Phosphoribosyl-ATP pyrophosphatase (94 aa).

This sequence belongs to the PRA-PH family.

It localises to the cytoplasm. The enzyme catalyses 1-(5-phospho-beta-D-ribosyl)-ATP + H2O = 1-(5-phospho-beta-D-ribosyl)-5'-AMP + diphosphate + H(+). It participates in amino-acid biosynthesis; L-histidine biosynthesis; L-histidine from 5-phospho-alpha-D-ribose 1-diphosphate: step 2/9. This Pyrobaculum islandicum (strain DSM 4184 / JCM 9189 / GEO3) protein is Phosphoribosyl-ATP pyrophosphatase.